A 329-amino-acid chain; its full sequence is Tyrosine recombinase XerC 1 (329 aa).

Residues 14–101 (APPHPQIGAY…AWRGWYQWLA (88 aa)) form the Core-binding (CB) domain. A Tyr recombinase domain is found at 123-320 (RLPKALSVEQ…DFQHLAKIYD (198 aa)). Active-site residues include R163, K198, H272, R275, and H298. The active-site O-(3'-phospho-DNA)-tyrosine intermediate is the Y307.

The protein belongs to the 'phage' integrase family. XerC subfamily. As to quaternary structure, forms a cyclic heterotetrameric complex composed of two molecules of XerC and two molecules of XerD.

It is found in the cytoplasm. Functionally, site-specific tyrosine recombinase, which acts by catalyzing the cutting and rejoining of the recombining DNA molecules. The XerC-XerD complex is essential to convert dimers of the bacterial chromosome into monomers to permit their segregation at cell division. It also contributes to the segregational stability of plasmids. The chain is Tyrosine recombinase XerC 1 (xerC1) from Ralstonia nicotianae (strain ATCC BAA-1114 / GMI1000) (Ralstonia solanacearum).